The sequence spans 1171 residues: MERKQTQMILGRRLAKDSPEVKHFQRKSSVVPFGRDGRAATNFTCWTADCPAVKADPTLVFAKCIVVGGSMDTQLELEQVDPPARGTFTVAPTDVFNANELIEPETVDDIGYLPHTNVACVLDVLKSRFLRSIIYTTAEPLLVAINPFKDLGNTTDAWISTYRNASKPEMLPPHVFKTARAALEDLEGYKKNQSIIVSGESGAGKTEATKQIMRFFASASSEVRTTIQDTIMAGNPILEAFGNAKTIRNNNSSRFGRFMMLDVSSHRGIQHGSISNFLLEKVRVVSQEANERSYHIFYQLLKGATSEMRAKYHLRSLKEYAYLNGKNGGCYDVPGIDDKADFEEVLQSLDAMQITGSKRHSVFSILSGLLLIGNVSIEGKDAQGVPDAAYISPQSEEILEEACQLLSVDDAALKKEILVKSTKVGPQVIEGVRTKDEAKTSVLSLSKNVYDKLFDWLVRQLNSLIDAPDGMPNFIGILDIFGFEVLEVNSLEQVLINITNEYLQKHFIDVVFDMETKLYQAEGVPTEALEYTDNLALVGALCGKNDSFFALLEDACLGIRSTDEGFCGTILRRLEPSGFFLESRRDKRLKFIIRHTIADIEYTCEGMLEKNKDFLRKEVMDVMKASTDPVTKALFEGIEIEAGKIGKGTLIASRFLKNLEEMIGIVAQTEAHFIRCLKPNEEKKPLGWNGSKVLNQLFSLSILEALQLRQVGYAYRRNFSEFCSHFRWLDLGLVNSDRDRKEVAQLLLEQSGIPESSWVIGKTMVFVKPDAAKELSILQREKLMCFQPLIAVLGPMWRKVLLRKKMARVIHFLTRLESNARRHLEPDSINISPEEREALLSGMERPRNPCVVVKKRVEPERAPPTKVLSLSRARLSLSKELPRNYAASNEALDVDDTMSVDTDAFLRLKMKRSPNENYLRQTALARLKERRPSHVCMEEAYHVWRSVELLFREPLSDKRLQNICTVIRNDMDQHYGFFWQVIINRTPNFGMAATHIHGSLHVVEQEGMYRDGRQFLFHLIMYKTRKPRKEEIRLHERAAEKTYGICRKRDFSGIVRVMNSKVPPYMQKDVSYLIGMLFQRYQYTRDWTNFATCIQSYLIGRYSEPFGGAWNVVAQEGAFFLSRLWTKHSRFLRVEIDFPALAEQASSEPCPGCPTPVLTVVCFEACAPDRP.

The region spanning 105–780 (ETVDDIGYLP…AAKELSILQR (676 aa)) is the Myosin motor domain. 199-206 (GESGAGKT) serves as a coordination point for ATP. Residues 671-681 (AHFIRCLKPNE) are actin-binding. Residues 810–1171 (IHFLTRLESN…CFEACAPDRP (362 aa)) form a tail region.

This sequence belongs to the TRAFAC class myosin-kinesin ATPase superfamily. Myosin family.

The protein resides in the cytoplasm. Functionally, myosins are actin-based motor molecules with ATPase activity. Unconventional myosins serve in intracellular movements. Their highly divergent tails are presumed to bind to membranous compartments, which would be moved relative to actin filaments. Plays a role in proper daughter cell budding and separation. This is Myosin-B/C from Toxoplasma gondii.